A 378-amino-acid chain; its full sequence is MSTPEQWIQEFEALCSRASILFPSGIEDENIRIRALRIAEKAVHQLHTPMTFAEAQTWAPLELFGAGVACEMGIFDVLSKSSVPLSPVDIATELNTDPALVARIMRLLDAHYMVDQVTLGQYAANAITRDYVQPYRKGNVMTQVALMPSYFALPAWLRDNDYKVRPDANHCAWQVGANTTKTFWEMPRTTQEDDFVTFYPFEAVFSTSNVDDILFVDIGGGLGHQAMRVRSAFPRSRGRIIVQDLPQVTNKITTASLPDVEIMDHDMADPQPVKGARVYYLRGVLHNHADHISIKYLSQFAAAMSPESRLLIHEALATDLNPTKNITRFDLSMLASCGGAQRSEAEQKALLEKVGLEVSGVWSTPRDWSIMEARLKRE.

S-adenosyl-L-methionine-binding positions include Gly219 to Gly220, Asp244, Asp266 to Met267, and Arg282. His286 acts as the Proton acceptor in catalysis.

This sequence belongs to the class I-like SAM-binding methyltransferase superfamily. Cation-independent O-methyltransferase family.

It catalyses the reaction desmethyl-dehydrogriseofulvin + S-adenosyl-L-methionine = dehydrogriseofulvin + S-adenosyl-L-homocysteine + H(+). It participates in secondary metabolite biosynthesis; terpenoid biosynthesis. Its function is as follows. O-methyltransferase; part of the gene cluster that mediates the biosynthesis of griseofulvin, an important antifungal drug that has been in use for a long time for treating dermatophyte infections. The first step of the pathway is the formation of the heptaketide backbone by gsfA which is initiated by priming with acetyl-CoA, followed by sequential condensations of 6 malonyl-CoA units. The resulting benzophenone can undergo a spontaneous dehydration to form norlichexanthone. However, the true precursor for the griseofulvin biosynthesis is not norlichexanthone, but the heptaketide benzophenone that is O-methylated at 3-OH by gsfB to produce griseophenone D which is further methylated at 9-OH by gsfC to yield griseophenone C. Griseophenone C is then substrate of halogenase gsfI which is responsible for the regio-specific chlorination at the C13 position to form griseophenone B. The cytochrome P450 gsfF catalyzes the coupling of orcinol and phloroglucinol rings in griseophenone B to form desmethyl-dehydrogriseofulvin A which is further methylated at 5-OH by gsfD to yield dehydrogriseofulvin. Finally, gsfE performs stereospecific reduction of enone 18 of dehydrogriseofulvin to afford the final product griseofulvin. This is O-methyltransferase gsfD from Penicillium aethiopicum.